The following is a 117-amino-acid chain: MIPGMGMNPKQLKQMQRAMKQMGMDMKDLRGVEEVVIKLKRKEIIIKNPKVNVMEFMGQKTYQVTGKARERSLEAEMEIPEDDIELVMNQTGASREDATRALQETGGDLAEAIMRLS.

Positions 9–77 (PKQLKQMQRA…ARERSLEAEM (69 aa)) constitute an NAC-A/B domain.

The protein belongs to the NAC-alpha family. In terms of assembly, homodimer. Interacts with the ribosome. Binds ribosomal RNA.

Its function is as follows. Contacts the emerging nascent chain on the ribosome. The chain is Nascent polypeptide-associated complex protein from Methanothermobacter thermautotrophicus (strain ATCC 29096 / DSM 1053 / JCM 10044 / NBRC 100330 / Delta H) (Methanobacterium thermoautotrophicum).